The chain runs to 243 residues: 1-(5-phosphoribosyl)-5-[(5-phosphoribosylamino)methylideneamino] imidazole-4-carboxamide isomerase (243 aa).

The Proton acceptor role is filled by Asp8. Asp130 (proton donor) is an active-site residue.

Belongs to the HisA/HisF family.

The protein resides in the cytoplasm. It catalyses the reaction 1-(5-phospho-beta-D-ribosyl)-5-[(5-phospho-beta-D-ribosylamino)methylideneamino]imidazole-4-carboxamide = 5-[(5-phospho-1-deoxy-D-ribulos-1-ylimino)methylamino]-1-(5-phospho-beta-D-ribosyl)imidazole-4-carboxamide. It participates in amino-acid biosynthesis; L-histidine biosynthesis; L-histidine from 5-phospho-alpha-D-ribose 1-diphosphate: step 4/9. This Vesicomyosocius okutanii subsp. Calyptogena okutanii (strain HA) protein is 1-(5-phosphoribosyl)-5-[(5-phosphoribosylamino)methylideneamino] imidazole-4-carboxamide isomerase.